Reading from the N-terminus, the 547-residue chain is Chaperonin GroEL 2 (547 aa).

ATP-binding positions include Thr30–Pro33, Lys51, Asp87–Thr91, Gly415, Asn479–Ala481, and Asp495. A disordered region spans residues Pro525–Met547. Over residues Ala533 to Met547 the composition is skewed to gly residues.

The protein belongs to the chaperonin (HSP60) family. Forms a cylinder of 14 subunits composed of two heptameric rings stacked back-to-back. Interacts with the co-chaperonin GroES.

It is found in the cytoplasm. It catalyses the reaction ATP + H2O + a folded polypeptide = ADP + phosphate + an unfolded polypeptide.. Functionally, together with its co-chaperonin GroES, plays an essential role in assisting protein folding. The GroEL-GroES system forms a nano-cage that allows encapsulation of the non-native substrate proteins and provides a physical environment optimized to promote and accelerate protein folding. The chain is Chaperonin GroEL 2 from Anaeromyxobacter dehalogenans (strain 2CP-C).